The primary structure comprises 396 residues: Elongation factor Tu 1 (396 aa).

A tr-type G domain is found at 10-206 (KPHVNIGTIG…AVDEYIPTPE (197 aa)). The segment at 19 to 26 (GHVDHGKT) is G1. 19-26 (GHVDHGKT) is a binding site for GTP. T26 contributes to the Mg(2+) binding site. A G2 region spans residues 60 to 64 (GITIN). Residues 81 to 84 (DCPG) are G3. Residues 81–85 (DCPGH) and 136–139 (NKVD) contribute to the GTP site. The segment at 136 to 139 (NKVD) is G4. Positions 174–176 (SAL) are G5.

It belongs to the TRAFAC class translation factor GTPase superfamily. Classic translation factor GTPase family. EF-Tu/EF-1A subfamily. Monomer.

Its subcellular location is the cytoplasm. The enzyme catalyses GTP + H2O = GDP + phosphate + H(+). Its function is as follows. GTP hydrolase that promotes the GTP-dependent binding of aminoacyl-tRNA to the A-site of ribosomes during protein biosynthesis. This chain is Elongation factor Tu 1, found in Hyphomonas neptunium (strain ATCC 15444).